The primary structure comprises 148 residues: UPF0756 membrane protein Ent638_1667 (148 aa).

4 helical membrane-spanning segments follow: residues 14-34 (ALGF…LIIV), 51-71 (LTIG…SGTL), 86-106 (LIAI…VTLM), and 121-141 (VLGV…AGLV).

It belongs to the UPF0756 family.

The protein resides in the cell membrane. The chain is UPF0756 membrane protein Ent638_1667 from Enterobacter sp. (strain 638).